The following is a 590-amino-acid chain: Methionine--tRNA ligase, mitochondrial (590 aa).

A mitochondrion-targeting transit peptide spans 1–26 (MRTRFLFLTSGCKAVPELHKIVLANA). Residues 51-61 (FYVNASPHLGH) carry the 'HIGH' region motif. The 'KMSKS' region motif lies at 342 to 346 (KMSKS). Residue Lys345 participates in ATP binding. The tract at residues 570–590 (LESQRADQQKNRKMEKGSNLK) is disordered. A compositionally biased stretch (basic and acidic residues) spans 571–590 (ESQRADQQKNRKMEKGSNLK).

It belongs to the class-I aminoacyl-tRNA synthetase family.

It is found in the mitochondrion matrix. The catalysed reaction is tRNA(Met) + L-methionine + ATP = L-methionyl-tRNA(Met) + AMP + diphosphate. This Takifugu rubripes (Japanese pufferfish) protein is Methionine--tRNA ligase, mitochondrial (mars2).